The following is a 368-amino-acid chain: MTDNSQIKVIVGMSGGVDSSVSAYLLQQQGYQVEGLFMKNWEEDDTDEYCSAAQDLADAKAVCDKLGMKLHTINFAAEYWDNVFEHFLEEYKAGRTPNPDILCNKEIKFKAFLEFAAEELGATYIATGHYVRRDDSTGRPRLLRGLDTNKDQSYFLYTLSEAQVGQSLFPVGDLEKPEVRRIAEQLDLITAKKKDSTGICFIGERKFKDFLAKFLPAQPGPIETVDGKVIGEHQGLMYHTLGQRKGLGIGGRKDATEEAWYVVDKEVERNTLVVAQGEHPRLYSDGLIASQLHWVDRTPIRAPRRCTVKTRYRQEDIPCLIQPIDDETIRVIFDEKQAAVTPGQSAVFYDGEVCLGGGIIEQRFSHPV.

Residues 12–19 (GMSGGVDS) and M38 contribute to the ATP site. Positions 98-100 (NPD) are interaction with target base in tRNA. C103 functions as the Nucleophile in the catalytic mechanism. A disulfide bridge connects residues C103 and C200. ATP is bound at residue G128. An interaction with tRNA region spans residues 150–152 (KDQ). C200 functions as the Cysteine persulfide intermediate in the catalytic mechanism. Positions 311–312 (RY) are interaction with tRNA.

Belongs to the MnmA/TRMU family.

It is found in the cytoplasm. The enzyme catalyses S-sulfanyl-L-cysteinyl-[protein] + uridine(34) in tRNA + AH2 + ATP = 2-thiouridine(34) in tRNA + L-cysteinyl-[protein] + A + AMP + diphosphate + H(+). Catalyzes the 2-thiolation of uridine at the wobble position (U34) of tRNA, leading to the formation of s(2)U34. The polypeptide is tRNA-specific 2-thiouridylase MnmA (Aeromonas hydrophila subsp. hydrophila (strain ATCC 7966 / DSM 30187 / BCRC 13018 / CCUG 14551 / JCM 1027 / KCTC 2358 / NCIMB 9240 / NCTC 8049)).